The following is a 184-amino-acid chain: Gremlin-1 (184 aa).

Positions 1–24 (MNRTAYTVGALLLLLGTLLPAAEG) are cleaved as a signal peptide. Residues N2 and N42 are each glycosylated (N-linked (GlcNAc...) asparagine). Positions 24–78 (GKKKGSQGAIPPPDKAQHNDSEQTQSPPQPGSRTRGRGQGRGTAMPGEEVLESSQ) are disordered. 4 disulfide bridges follow: C94–C144, C108–C158, C118–C176, and C122–C178. In terms of domain architecture, CTCK spans 94-184 (CKTQPLKQTI…QCRCISIDLD (91 aa)).

Belongs to the DAN family. Homodimer; can also form homooligomers. Interacts with BMP2; can form higher oligomers with BMP2. Interacts with SLIT1 and SLIT2 in a glycosylation-dependent manner. In terms of tissue distribution, highly expressed in the brain, kidney, spleen, and testis and weakly expressed in the lung and liver. Predominantly expressed in differentiated cells as neurons in brain, type I cells in lung and globlet cells in intestine.

The protein resides in the secreted. In terms of biological role, cytokine that may play an important role during carcinogenesis and metanephric kidney organogenesis, as a BMP antagonist required for early limb outgrowth and patterning in maintaining the FGF4-SHH feedback loop. Down-regulates the BMP4 signaling in a dose-dependent manner. Antagonist of BMP2; inhibits BMP2-mediated differentiation of osteoblasts (in vitro). Acts as inhibitor of monocyte chemotaxis. Can inhibit the growth or viability of normal cells but not transformed cells when is overexpressed. The sequence is that of Gremlin-1 (Grem1) from Rattus norvegicus (Rat).